A 488-amino-acid polypeptide reads, in one-letter code: Inosine-5'-monophosphate dehydrogenase (488 aa).

2 consecutive CBS domains span residues 95 to 153 (VISN…SIKI) and 157 to 216 (MTQE…AKDE). Residues Asp-250 and 300-302 (GIG) each bind NAD(+). Gly-302 and Gly-304 together coordinate K(+). Residue Ser-305 coordinates IMP. Cys-307 is a binding site for K(+). Cys-307 serves as the catalytic Thioimidate intermediate. Residues 340–342 (DGG), 363–364 (GS), and 387–391 (YRGMG) each bind IMP. The Proton acceptor role is filled by Arg-403. Residue Glu-417 participates in IMP binding. A disordered region spans residues 468 to 488 (GLAESHPHNIQITKESPNYSF). Glu-471, Ser-472, and His-473 together coordinate K(+). Positions 475–488 (HNIQITKESPNYSF) are enriched in polar residues.

It belongs to the IMPDH/GMPR family. In terms of assembly, homotetramer. Requires K(+) as cofactor.

It carries out the reaction IMP + NAD(+) + H2O = XMP + NADH + H(+). The protein operates within purine metabolism; XMP biosynthesis via de novo pathway; XMP from IMP: step 1/1. Its activity is regulated as follows. Mycophenolic acid (MPA) is a non-competitive inhibitor that prevents formation of the closed enzyme conformation by binding to the same site as the amobile flap. In contrast, mizoribine monophosphate (MZP) is a competitive inhibitor that induces the closed conformation. MPA is a potent inhibitor of mammalian IMPDHs but a poor inhibitor of the bacterial enzymes. MZP is a more potent inhibitor of bacterial IMPDH. Its function is as follows. Catalyzes the conversion of inosine 5'-phosphate (IMP) to xanthosine 5'-phosphate (XMP), the first committed and rate-limiting step in the de novo synthesis of guanine nucleotides, and therefore plays an important role in the regulation of cell growth. The protein is Inosine-5'-monophosphate dehydrogenase of Staphylococcus aureus (strain MW2).